Reading from the N-terminus, the 590-residue chain is Putative histone-lysine N-methyltransferase PRDM6 (590 aa).

Positions 25–87 are disordered; that stretch reads QLFPHGGGGP…STPASSSTSA (63 aa). Residues 29 to 42 are compositionally biased toward gly residues; the sequence is HGGGGPLKGGGAAG. Residues 71–87 show a composition bias toward low complexity; sequence ASLSSASSTPASSSTSA. Residues 241-360 enclose the SET domain; the sequence is REVCLCTSTV…RGTELLVWYN (120 aa). A C2H2-type 1; degenerate zinc finger spans residues 468-490; it reads WKCGQCFKTFTQRILLQMHVCTQ. 2 C2H2-type zinc fingers span residues 496–518 and 524–546; these read YQCG…VVTH and FKCG…IRTH. The C2H2-type 4; degenerate zinc finger occupies 552–574; sequence FKCERCERSFTQATQLSRHQRMP.

The protein belongs to the class V-like SAM-binding methyltransferase superfamily. As to quaternary structure, interacts with HDAC1, HDAC2, HDAC3, CBX1 and EP300.

Its subcellular location is the nucleus. It catalyses the reaction L-lysyl(20)-[histone H4] + S-adenosyl-L-methionine = N(6)-methyl-L-lysyl(20)-[histone H4] + S-adenosyl-L-homocysteine + H(+). In terms of biological role, putative histone methyltransferase that acts as a transcriptional repressor of smooth muscle gene expression. Promotes the transition from differentiated to proliferative smooth muscle by suppressing differentiation and maintaining the proliferative potential of vascular smooth muscle cells. Also plays a role in endothelial cells by inhibiting endothelial cell proliferation, survival and differentiation. It is unclear whether it has histone methyltransferase activity in vivo. According to some authors, it does not act as a histone methyltransferase by itself and represses transcription by recruiting EHMT2/G9a. According to others, it possesses histone methyltransferase activity when associated with other proteins and specifically methylates 'Lys-20' of histone H4 in vitro. 'Lys-20' methylation represents a specific tag for epigenetic transcriptional repression. The polypeptide is Putative histone-lysine N-methyltransferase PRDM6 (PRDM6) (Bos taurus (Bovine)).